The chain runs to 107 residues: Nucleoid-associated protein RBE_0048 (107 aa).

The protein belongs to the YbaB/EbfC family. As to quaternary structure, homodimer.

Its subcellular location is the cytoplasm. The protein localises to the nucleoid. Binds to DNA and alters its conformation. May be involved in regulation of gene expression, nucleoid organization and DNA protection. The chain is Nucleoid-associated protein RBE_0048 from Rickettsia bellii (strain RML369-C).